The chain runs to 124 residues: uncharacterized protein (124 aa).

Residues 62-72 (KKNKKQTFLKH) are compositionally biased toward basic residues. The tract at residues 62 to 86 (KKNKKQTFLKHHQSDDHSENKVYKS) is disordered. A compositionally biased stretch (basic and acidic residues) spans 73-83 (HQSDDHSENKV). The stretch at 80–112 (ENKVYKSKKLEKKIQQLNKKKQLIDTKINFLKE) forms a coiled coil.

This is an uncharacterized protein from Dictyostelium discoideum (Social amoeba).